A 453-amino-acid chain; its full sequence is Glutamyl-tRNA(Gln) amidotransferase subunit A (453 aa).

Active-site charge relay system residues include lysine 56 and serine 131. Residue serine 155 is the Acyl-ester intermediate of the active site.

Belongs to the amidase family. GatA subfamily. As to quaternary structure, heterotrimer of A, B and C subunits.

The catalysed reaction is L-glutamyl-tRNA(Gln) + L-glutamine + ATP + H2O = L-glutaminyl-tRNA(Gln) + L-glutamate + ADP + phosphate + H(+). Allows the formation of correctly charged Gln-tRNA(Gln) through the transamidation of misacylated Glu-tRNA(Gln) in organisms which lack glutaminyl-tRNA synthetase. The reaction takes place in the presence of glutamine and ATP through an activated gamma-phospho-Glu-tRNA(Gln). The sequence is that of Glutamyl-tRNA(Gln) amidotransferase subunit A from Campylobacter jejuni subsp. doylei (strain ATCC BAA-1458 / RM4099 / 269.97).